A 111-amino-acid polypeptide reads, in one-letter code: UPF0235 protein glr3835 (111 aa).

The protein belongs to the UPF0235 family.

The chain is UPF0235 protein glr3835 from Gloeobacter violaceus (strain ATCC 29082 / PCC 7421).